The sequence spans 218 residues: 3,4-dihydroxy-2-butanone 4-phosphate synthase (218 aa).

D-ribulose 5-phosphate contacts are provided by residues 38-39 (RE), D43, 151-155 (RRGHT), and E175. Position 39 (E39) interacts with Mg(2+). H154 is a Mg(2+) binding site.

It belongs to the DHBP synthase family. In terms of assembly, homodimer. The cofactor is Mg(2+). Requires Mn(2+) as cofactor.

It carries out the reaction D-ribulose 5-phosphate = (2S)-2-hydroxy-3-oxobutyl phosphate + formate + H(+). It participates in cofactor biosynthesis; riboflavin biosynthesis; 2-hydroxy-3-oxobutyl phosphate from D-ribulose 5-phosphate: step 1/1. Functionally, catalyzes the conversion of D-ribulose 5-phosphate to formate and 3,4-dihydroxy-2-butanone 4-phosphate. The sequence is that of 3,4-dihydroxy-2-butanone 4-phosphate synthase from Vibrio atlanticus (strain LGP32) (Vibrio splendidus (strain Mel32)).